The chain runs to 277 residues: Cation-dependent mannose-6-phosphate receptor (277 aa).

Residues 1-26 form the signal peptide; it reads MFPFYSCWRTGLLLLLLAVAVRESWQ. Over 27 to 185 the chain is Lumenal; sequence TEEKTCDLVG…SLACSPEISH (159 aa). The 152-residue stretch at 30–181 folds into the MRH domain; it reads KTCDLVGEKG…EMDSSLACSP (152 aa). An intrachain disulfide couples Cys32 to Cys78. N-linked (GlcNAc...) asparagine glycosylation is found at Asn57, Asn83, Asn94, Asn107, and Asn113. 2 cysteine pairs are disulfide-bonded: Cys132–Cys167 and Cys145–Cys179. A helical transmembrane segment spans residues 186–210; that stretch reads LSVGSILLVTFASLVAVYVVGGFLY. The Cytoplasmic portion of the chain corresponds to 211–277; the sequence is QRLVVGAKGM…EERDDHLLPM (67 aa). Residues 256 to 277 are disordered; it reads RGVGDDQLGEESEERDDHLLPM. Ser267 bears the Phosphoserine mark.

Homodimer. Binds GGA1, GGA2 and GGA3.

The protein resides in the lysosome membrane. In terms of biological role, transport of phosphorylated lysosomal enzymes from the Golgi complex and the cell surface to lysosomes. Lysosomal enzymes bearing phosphomannosyl residues bind specifically to mannose-6-phosphate receptors in the Golgi apparatus and the resulting receptor-ligand complex is transported to an acidic prelyosomal compartment where the low pH mediates the dissociation of the complex. This Homo sapiens (Human) protein is Cation-dependent mannose-6-phosphate receptor (M6PR).